Reading from the N-terminus, the 50-residue chain is uncharacterized protein (50 aa).

This is an uncharacterized protein from His1 virus (isolate Australia/Victoria) (His1V).